Here is a 126-residue protein sequence, read N- to C-terminus: Small ribosomal subunit protein bS6 (126 aa).

The disordered stretch occupies residues 107–126 (RDRERGERSERPRDDFAPAA).

It belongs to the bacterial ribosomal protein bS6 family.

In terms of biological role, binds together with bS18 to 16S ribosomal RNA. The chain is Small ribosomal subunit protein bS6 from Caulobacter sp. (strain K31).